The chain runs to 418 residues: AP-3 complex subunit mu-1 (418 aa).

The MHD domain occupies 176-417 (NNEAYFDVIE…ITKAGKFQVR (242 aa)).

The protein belongs to the adaptor complexes medium subunit family. The AP-3 complex associates with the BLOC-1 complex.

The protein resides in the golgi apparatus. The protein localises to the cytoplasmic vesicle membrane. Its function is as follows. Part of the AP-3 complex, an adaptor-related complex which is not clathrin-associated. The complex is associated with the Golgi region as well as more peripheral structures. It facilitates the budding of vesicles from the Golgi membrane and may be directly involved in trafficking to lysosomes. In concert with the BLOC-1 complex, AP-3 is required to target cargos into vesicles assembled at cell bodies for delivery into neurites and nerve terminals. The chain is AP-3 complex subunit mu-1 (AP3M1) from Gallus gallus (Chicken).